Consider the following 214-residue polypeptide: Peroxiredoxin-5, mitochondrial (214 aa).

A mitochondrion-targeting transit peptide spans Met-1–Ala-52. The Thioredoxin domain occupies Ile-56–Leu-214. N6-acetyllysine is present on Lys-75. Lys-83 is subject to N6-acetyllysine; alternate. Residue Lys-83 is modified to N6-succinyllysine; alternate. The Cysteine sulfenic acid (-SOH) intermediate role is filled by Cys-100. The S-palmitoyl cysteine moiety is linked to residue Cys-100. Cysteines 100 and 204 form a disulfide. Position 116 is an N6-succinyllysine (Lys-116). Phosphoserine is present on residues Ser-171 and Ser-182. The short motif at Ser-212–Leu-214 is the Microbody targeting signal element.

Belongs to the peroxiredoxin family. Prx5 subfamily. In terms of assembly, monomer. S-palmitoylated. Palmitoylation occurs on the active site, inhibiting its reactivity; therefore PRDX5 palmitoylation status determines its antioxidant capacity. Post-translationally, S-palmitoylated. Depalmitoylated by ABHD10. As to expression, widely expressed.

Its subcellular location is the mitochondrion. The protein localises to the cytoplasm. The protein resides in the peroxisome matrix. The enzyme catalyses a hydroperoxide + [thioredoxin]-dithiol = an alcohol + [thioredoxin]-disulfide + H2O. Functionally, thiol-specific peroxidase that catalyzes the reduction of hydrogen peroxide and organic hydroperoxides to water and alcohols, respectively. Plays a role in cell protection against oxidative stress by detoxifying peroxides and as sensor of hydrogen peroxide-mediated signaling events. This Homo sapiens (Human) protein is Peroxiredoxin-5, mitochondrial.